Here is a 457-residue protein sequence, read N- to C-terminus: Phosphomethylpyrimidine synthase (457 aa).

Substrate is bound by residues Asn81, Met110, Tyr139, His175, 195–197 (SRG), 236–239 (DALR), and Glu275. His279 is a Zn(2+) binding site. Tyr302 serves as a coordination point for substrate. His343 provides a ligand contact to Zn(2+). Cys423, Cys426, and Cys431 together coordinate [4Fe-4S] cluster.

Belongs to the ThiC family. The cofactor is [4Fe-4S] cluster.

It catalyses the reaction 5-amino-1-(5-phospho-beta-D-ribosyl)imidazole + S-adenosyl-L-methionine = 4-amino-2-methyl-5-(phosphooxymethyl)pyrimidine + CO + 5'-deoxyadenosine + formate + L-methionine + 3 H(+). The protein operates within cofactor biosynthesis; thiamine diphosphate biosynthesis. Functionally, catalyzes the synthesis of the hydroxymethylpyrimidine phosphate (HMP-P) moiety of thiamine from aminoimidazole ribotide (AIR) in a radical S-adenosyl-L-methionine (SAM)-dependent reaction. In Aquifex aeolicus (strain VF5), this protein is Phosphomethylpyrimidine synthase.